The following is a 475-amino-acid chain: Ribulose bisphosphate carboxylase large chain (475 aa).

A propeptide spanning residues 1 to 2 is cleaved from the precursor; it reads MV. An N-acetylproline modification is found at Pro3. Lys14 bears the N6,N6,N6-trimethyllysine mark. The substrate site is built by Asn123 and Thr173. The active-site Proton acceptor is the Lys175. Lys177 is a substrate binding site. Lys201, Asp203, and Glu204 together coordinate Mg(2+). Residue Lys201 is modified to N6-carboxylysine. Residue His294 is the Proton acceptor of the active site. Arg295, His327, and Ser379 together coordinate substrate.

The protein belongs to the RuBisCO large chain family. Type I subfamily. As to quaternary structure, heterohexadecamer of 8 large chains and 8 small chains. The cofactor is Mg(2+).

Its subcellular location is the plastid. The protein resides in the chloroplast. It carries out the reaction 2 (2R)-3-phosphoglycerate + 2 H(+) = D-ribulose 1,5-bisphosphate + CO2 + H2O. The catalysed reaction is D-ribulose 1,5-bisphosphate + O2 = 2-phosphoglycolate + (2R)-3-phosphoglycerate + 2 H(+). RuBisCO catalyzes two reactions: the carboxylation of D-ribulose 1,5-bisphosphate, the primary event in carbon dioxide fixation, as well as the oxidative fragmentation of the pentose substrate in the photorespiration process. Both reactions occur simultaneously and in competition at the same active site. This is Ribulose bisphosphate carboxylase large chain from Chlamydomonas moewusii (Chlamydomonas eugametos).